The chain runs to 131 residues: Auxin-responsive protein SAUR77 (131 aa).

It belongs to the ARG7 family.

Its function is as follows. May be involved in the regulation of ethylene receptor signaling. Promotes cell expansion and plant growth. The sequence is that of Auxin-responsive protein SAUR77 from Arabidopsis thaliana (Mouse-ear cress).